The chain runs to 140 residues: Ctenidin-1 (140 aa).

An N-terminal signal peptide occupies residues 1–19 (MKHLIPLIVMASVVLAVYA). A Glycine amide modification is found at G138.

This sequence belongs to the glycine-rich peptide family. As to expression, expressed in hemocytes (at protein level).

Its subcellular location is the secreted. Antimicrobial protein with bacteriostatic activity against the Gram-negative bacterium E.coli, and very weak activity against the Gram-positive bacterium S.aureus. Lacks activity against the yeast C.albicans. The polypeptide is Ctenidin-1 (Cupiennius salei (American wandering spider)).